Consider the following 1519-residue polypeptide: Putative lipoprotein YghJ (1519 aa).

The signal sequence occupies residues 1–23; that stretch reads MNKKFKYKKSLLAAILSATLLAG. 2 disordered regions span residues 22 to 107 and 226 to 247; these read AGCD…GATC and NAAT…TTPG. The N-palmitoyl cysteine moiety is linked to residue Cys-24. Cys-24 is lipidated: S-diacylglycerol cysteine. The span at 31 to 42 shows a compositional bias: low complexity; sequence SSSDTPPVDSGT. Over residues 51 to 77 the composition is skewed to pro residues; it reads DPTPNPEPTPEPTPDPEPTPEPIPDPE. Residues 97 to 107 are compositionally biased toward polar residues; it reads GGSQRVTGATC. Positions 234 to 247 are enriched in low complexity; that stretch reads STHTSPVVPVTTPG. Residues 1080-1380 form the Peptidase M60 domain; it reads GNMQSTGLWA…MYAQLKEWAE (301 aa). Residues 1497–1519 form a disordered region; sequence DLPKPEQGPETINQVTEHKMSAE.

This sequence to V.cholerae AcfD (VC_0845).

It is found in the cell membrane. May be a substrate of the type II secretion system beta (T2SS-beta). This is Putative lipoprotein YghJ (yghJ) from Escherichia coli O78:H11 (strain H10407 / ETEC).